Reading from the N-terminus, the 64-residue chain is Large ribosomal subunit protein bL28 (64 aa).

Residues 1–21 form a disordered region; it reads MAKKDQLTLRGPLYGNNRSHS.

It belongs to the bacterial ribosomal protein bL28 family.

The chain is Large ribosomal subunit protein bL28 from Mycoplasma genitalium (strain ATCC 33530 / DSM 19775 / NCTC 10195 / G37) (Mycoplasmoides genitalium).